The following is a 679-amino-acid chain: Protein asunder (679 aa).

Residues 519 to 541 (RLKVNKTKDQYRLFYRELEQLIQ) adopt a coiled-coil conformation. Residues 564–610 (GDASNKSDPSAAHLRSYTESPLSPERLEPTNSVNSSSSSILKASKRR) form a disordered region. Residues 604–610 (LKASKRR) carry the Nuclear localization signal (NLS) motif.

It belongs to the Integrator subunit 13 family. As to quaternary structure, belongs to the multiprotein complex Integrator, at least composed of IntS1, IntS2, IntS3, IntS4, omd/IntS5, IntS6, defl/IntS7, IntS8, IntS9, IntS10, IntS11, IntS12, asun/IntS13, IntS14 and IntS15. The core complex associates with protein phosphatase 2A subunits mts/PP2A and Pp2A-29B, to form the Integrator-PP2A (INTAC) complex. In terms of processing, phosphorylated.

It is found in the nucleus. It localises to the cytoplasm. The protein localises to the perinuclear region. In terms of biological role, component of the integrator complex, a multiprotein complex that terminates RNA polymerase II (Pol II) transcription in the promoter-proximal region of genes. The integrator complex provides a quality checkpoint during transcription elongation by driving premature transcription termination of transcripts that are unfavorably configured for transcriptional elongation: the complex terminates transcription by (1) catalyzing dephosphorylation of the C-terminal domain (CTD) of Pol II subunit Polr2A/Rbp1 and Spt5, and (2) degrading the exiting nascent RNA transcript via endonuclease activity. The integrator complex is also involved in the 3'-end processing of the U7 snRNA, and also the spliceosomal snRNAs U1, U2, U4 and U5. This chain is Protein asunder (asun), found in Drosophila mojavensis (Fruit fly).